The primary structure comprises 314 residues: DNA-directed RNA polymerase subunit alpha (314 aa).

The interval 1–228 (MIEIEKPKIE…EHLNIFVGLT (228 aa)) is alpha N-terminal domain (alpha-NTD). An alpha C-terminal domain (alpha-CTD) region spans residues 245-314 (KEKVLEMTIE…ELGLGLRKDD (70 aa)).

The protein belongs to the RNA polymerase alpha chain family. Homodimer. RNAP is composed of a core of 2 alpha, a beta and a beta' subunit. The core is associated with a delta subunit, and at least one of epsilon or omega. When a sigma factor is associated with the core the holoenzyme is formed, which can initiate transcription.

The enzyme catalyses RNA(n) + a ribonucleoside 5'-triphosphate = RNA(n+1) + diphosphate. Its function is as follows. DNA-dependent RNA polymerase catalyzes the transcription of DNA into RNA using the four ribonucleoside triphosphates as substrates. The sequence is that of DNA-directed RNA polymerase subunit alpha from Bacillus subtilis (strain 168).